A 215-amino-acid polypeptide reads, in one-letter code: Pyridoxine/pyridoxamine 5'-phosphate oxidase (215 aa).

Substrate contacts are provided by residues 11 to 14 (RRDY) and Lys-69. Residues 64 to 69 (RVVLLK), 79 to 80 (YT), Lys-86, and Gln-108 contribute to the FMN site. Substrate contacts are provided by Tyr-126, Arg-130, and Ser-134. FMN-binding positions include 143 to 144 (QS) and Trp-188. 194–196 (RLH) lines the substrate pocket. Arg-198 contributes to the FMN binding site.

The protein belongs to the pyridoxamine 5'-phosphate oxidase family. As to quaternary structure, homodimer. It depends on FMN as a cofactor.

The enzyme catalyses pyridoxamine 5'-phosphate + O2 + H2O = pyridoxal 5'-phosphate + H2O2 + NH4(+). The catalysed reaction is pyridoxine 5'-phosphate + O2 = pyridoxal 5'-phosphate + H2O2. Its pathway is cofactor metabolism; pyridoxal 5'-phosphate salvage; pyridoxal 5'-phosphate from pyridoxamine 5'-phosphate: step 1/1. It participates in cofactor metabolism; pyridoxal 5'-phosphate salvage; pyridoxal 5'-phosphate from pyridoxine 5'-phosphate: step 1/1. Catalyzes the oxidation of either pyridoxine 5'-phosphate (PNP) or pyridoxamine 5'-phosphate (PMP) into pyridoxal 5'-phosphate (PLP). The protein is Pyridoxine/pyridoxamine 5'-phosphate oxidase of Legionella pneumophila (strain Lens).